A 116-amino-acid polypeptide reads, in one-letter code: Cysteine-rich venom protein Cau1 (116 aa).

The SCP domain occupies 4-42; that stretch reads SYAVVGHYTQIVWYKSDRIGCAAAYCPSSVYNYFYVCQY. Disulfide bonds link Cys-24-Cys-40, Cys-62-Cys-69, Cys-65-Cys-74, Cys-87-Cys-105, and Cys-96-Cys-109. Residues 78 to 111 enclose the ShKT domain; the sequence is CRVEDEFINCKDMAESRDCQDNYMMTNCAAFCSC.

It belongs to the CRISP family. Expressed by the venom gland.

The protein resides in the secreted. Functionally, blocks contraction of smooth muscle elicited by high potassium-induced depolarization, but does not block caffeine-stimulated contraction. May target voltage-gated calcium channels on smooth muscle. The polypeptide is Cysteine-rich venom protein Cau1 (Causus rhombeatus (Rhombic night adder)).